A 183-amino-acid polypeptide reads, in one-letter code: UPF0397 protein stu0306/stu0307 (183 aa).

Helical transmembrane passes span 11–31 (ATGIGAALFIIICIFVNIPIF), 44–64 (VLFSVIFGSRSIIGFFMGFIG), 74–94 (GDISWAWVLASGITGLVIGLF), 111–131 (IWFNLAQALGLLIAYGVVTPI), and 149–169 (FVAGVANFITIAIGGTLLLAI).

Belongs to the UPF0397 family.

The protein localises to the cell membrane. In Streptococcus thermophilus (strain ATCC BAA-250 / LMG 18311), this protein is UPF0397 protein stu0306/stu0307.